The chain runs to 79 residues: MKQTINIQDTFLNHLRKENIAVTIYLVNGFQLRGYIKAFDNFTIVIDSEGKQQLVYKHAISTFTPQRPVSLMSQENNQQ.

A Sm domain is found at 9–69; the sequence is DTFLNHLRKE…ISTFTPQRPV (61 aa).

The protein belongs to the Hfq family. As to quaternary structure, homohexamer.

Its function is as follows. RNA chaperone that binds small regulatory RNA (sRNAs) and mRNAs to facilitate mRNA translational regulation in response to envelope stress, environmental stress and changes in metabolite concentrations. Also binds with high specificity to tRNAs. The sequence is that of RNA-binding protein Hfq from Brevibacillus brevis (strain 47 / JCM 6285 / NBRC 100599).